A 320-amino-acid chain; its full sequence is ATP-dependent 6-phosphofructokinase (320 aa).

G12 provides a ligand contact to ATP. Residues 22–26 (RGVVR) and 55–60 (RYSVSD) contribute to the ADP site. ATP contacts are provided by residues 73–74 (RF) and 103–106 (GDGS). D104 provides a ligand contact to Mg(2+). A substrate-binding site is contributed by 126-128 (TID). D128 functions as the Proton acceptor in the catalytic mechanism. R155 provides a ligand contact to ADP. Substrate is bound by residues R163 and 170–172 (MGR). ADP is bound by residues 186–188 (GCE), K212, and 214–216 (KKH). Substrate-binding positions include E223, R244, and 250 to 253 (HIQR).

It belongs to the phosphofructokinase type A (PFKA) family. ATP-dependent PFK group I subfamily. Prokaryotic clade 'B1' sub-subfamily. Homotetramer. Mg(2+) serves as cofactor.

It localises to the cytoplasm. The enzyme catalyses beta-D-fructose 6-phosphate + ATP = beta-D-fructose 1,6-bisphosphate + ADP + H(+). The protein operates within carbohydrate degradation; glycolysis; D-glyceraldehyde 3-phosphate and glycerone phosphate from D-glucose: step 3/4. With respect to regulation, allosterically activated by ADP and other diphosphonucleosides, and allosterically inhibited by phosphoenolpyruvate. In terms of biological role, catalyzes the phosphorylation of D-fructose 6-phosphate to fructose 1,6-bisphosphate by ATP, the first committing step of glycolysis. The protein is ATP-dependent 6-phosphofructokinase of Escherichia fergusonii (strain ATCC 35469 / DSM 13698 / CCUG 18766 / IAM 14443 / JCM 21226 / LMG 7866 / NBRC 102419 / NCTC 12128 / CDC 0568-73).